A 163-amino-acid polypeptide reads, in one-letter code: Nucleotide-binding protein MUL_0671 (163 aa).

Belongs to the YajQ family.

Nucleotide-binding protein. This chain is Nucleotide-binding protein MUL_0671, found in Mycobacterium ulcerans (strain Agy99).